The following is a 126-amino-acid chain: Fluoride-specific ion channel FluC (126 aa).

4 helical membrane-spanning segments follow: residues 4 to 24, 35 to 55, 68 to 88, and 100 to 120; these read ILAI…IGLW, YGTF…LTLI, MLVT…YESF, and IGYM…GVGL. The Na(+) site is built by glycine 75 and threonine 78.

The protein belongs to the fluoride channel Fluc/FEX (TC 1.A.43) family.

It is found in the cell membrane. It carries out the reaction fluoride(in) = fluoride(out). With respect to regulation, na(+) is not transported, but it plays an essential structural role and its presence is essential for fluoride channel function. Functionally, fluoride-specific ion channel. Important for reducing fluoride concentration in the cell, thus reducing its toxicity. In Chloroflexus aurantiacus (strain ATCC 29366 / DSM 635 / J-10-fl), this protein is Fluoride-specific ion channel FluC.